A 510-amino-acid chain; its full sequence is Guanosine import ATP-binding protein NupO (510 aa).

ABC transporter domains follow at residues 5–240 and 257–501; these read IEML…VGRE and LAID…AGST. 37–44 is a binding site for ATP; it reads GENGAGKS.

It belongs to the ABC transporter superfamily. As to quaternary structure, the complex is composed of two ATP-binding proteins (NupO), two transmembrane proteins (NupP and NupQ) and a solute-binding protein (NupN).

The protein resides in the cell membrane. Part of an ABC transporter complex involved in the uptake of guanosine. Responsible for energy coupling to the transport system. May be a nucleoside transporter of broad specificity but with various affinities for different substrates. The sequence is that of Guanosine import ATP-binding protein NupO from Bacillus subtilis (strain 168).